The following is a 21-amino-acid chain: Chlorophyllase type 2 (21 aa).

It belongs to the AB hydrolase superfamily. Lipase family.

It carries out the reaction a chlorophyll + H2O = a chlorophyllide + phytol + H(+). Its pathway is porphyrin-containing compound metabolism; chlorophyll degradation. In terms of biological role, catalyzes the hydrolysis of ester bond in chlorophyll to yield chlorophyllide and phytol. The protein is Chlorophyllase type 2 of Chenopodium album (Fat hen).